Here is a 175-residue protein sequence, read N- to C-terminus: Crossover junction endodeoxyribonuclease RuvC (175 aa).

Catalysis depends on residues aspartate 8, glutamate 69, and aspartate 141. Aspartate 8, glutamate 69, and aspartate 141 together coordinate Mg(2+).

The protein belongs to the RuvC family. As to quaternary structure, homodimer which binds Holliday junction (HJ) DNA. The HJ becomes 2-fold symmetrical on binding to RuvC with unstacked arms; it has a different conformation from HJ DNA in complex with RuvA. In the full resolvosome a probable DNA-RuvA(4)-RuvB(12)-RuvC(2) complex forms which resolves the HJ. Mg(2+) serves as cofactor.

Its subcellular location is the cytoplasm. It catalyses the reaction Endonucleolytic cleavage at a junction such as a reciprocal single-stranded crossover between two homologous DNA duplexes (Holliday junction).. The RuvA-RuvB-RuvC complex processes Holliday junction (HJ) DNA during genetic recombination and DNA repair. Endonuclease that resolves HJ intermediates. Cleaves cruciform DNA by making single-stranded nicks across the HJ at symmetrical positions within the homologous arms, yielding a 5'-phosphate and a 3'-hydroxyl group; requires a central core of homology in the junction. The consensus cleavage sequence is 5'-(A/T)TT(C/G)-3'. Cleavage occurs on the 3'-side of the TT dinucleotide at the point of strand exchange. HJ branch migration catalyzed by RuvA-RuvB allows RuvC to scan DNA until it finds its consensus sequence, where it cleaves and resolves the cruciform DNA. This chain is Crossover junction endodeoxyribonuclease RuvC, found in Colwellia psychrerythraea (strain 34H / ATCC BAA-681) (Vibrio psychroerythus).